A 269-amino-acid chain; its full sequence is Formamidopyrimidine-DNA glycosylase (269 aa).

The active-site Schiff-base intermediate with DNA is proline 2. The active-site Proton donor is glutamate 3. Lysine 57 acts as the Proton donor; for beta-elimination activity in catalysis. 3 residues coordinate DNA: histidine 90, arginine 109, and lysine 150. An FPG-type zinc finger spans residues 235 to 269 (FVYGRAGEPCRICGEQIESIKLGQRSTFFCRHCQY). Arginine 259 functions as the Proton donor; for delta-elimination activity in the catalytic mechanism.

This sequence belongs to the FPG family. In terms of assembly, monomer. Requires Zn(2+) as cofactor.

The catalysed reaction is Hydrolysis of DNA containing ring-opened 7-methylguanine residues, releasing 2,6-diamino-4-hydroxy-5-(N-methyl)formamidopyrimidine.. The enzyme catalyses 2'-deoxyribonucleotide-(2'-deoxyribose 5'-phosphate)-2'-deoxyribonucleotide-DNA = a 3'-end 2'-deoxyribonucleotide-(2,3-dehydro-2,3-deoxyribose 5'-phosphate)-DNA + a 5'-end 5'-phospho-2'-deoxyribonucleoside-DNA + H(+). Functionally, involved in base excision repair of DNA damaged by oxidation or by mutagenic agents. Acts as a DNA glycosylase that recognizes and removes damaged bases. Has a preference for oxidized purines, such as 7,8-dihydro-8-oxoguanine (8-oxoG). Has AP (apurinic/apyrimidinic) lyase activity and introduces nicks in the DNA strand. Cleaves the DNA backbone by beta-delta elimination to generate a single-strand break at the site of the removed base with both 3'- and 5'-phosphates. In Photorhabdus laumondii subsp. laumondii (strain DSM 15139 / CIP 105565 / TT01) (Photorhabdus luminescens subsp. laumondii), this protein is Formamidopyrimidine-DNA glycosylase.